The primary structure comprises 314 residues: Cathepsin L 2 (314 aa).

The N-terminal stretch at 1-24 (MMLLGASLYLNNTQEVSDEIDTAN) is a signal peptide. A propeptide spans 25–109 (LYANWKMKYN…NASNANFQYK (85 aa)) (activation peptide). Intrachain disulfides connect Cys132–Cys175, Cys166–Cys207, and Cys259–Cys302. The active site involves Cys135. Catalysis depends on residues His265 and Asn282.

The protein belongs to the peptidase C1 family.

It localises to the secreted. The enzyme catalyses Specificity close to that of papain. As compared to cathepsin B, cathepsin L exhibits higher activity toward protein substrates, but has little activity on Z-Arg-Arg-NHMec, and no peptidyl-dipeptidase activity.. May be involved in extracellular digestion. This chain is Cathepsin L 2, found in Paramecium tetraurelia.